Reading from the N-terminus, the 631-residue chain is Transmembrane and coiled-coil domain-containing protein 4 (631 aa).

The disordered stretch occupies residues methionine 1–proline 26. A coiled-coil region spans residues glutamate 153 to lysine 183. Helical transmembrane passes span tyrosine 187 to valine 203, threonine 204 to isoleucine 220, leucine 228 to leucine 248, and leucine 343 to isoleucine 363. A disordered region spans residues tryptophan 523 to aspartate 631. The span at isoleucine 571 to aspartate 590 shows a compositional bias: polar residues.

Belongs to the TMCO4 family.

It is found in the membrane. The chain is Transmembrane and coiled-coil domain-containing protein 4 (Tmco4) from Rattus norvegicus (Rat).